A 255-amino-acid chain; its full sequence is Aquaporin TIP4-1 (255 aa).

2 helical membrane-spanning segments follow: residues 25–45 and 61–81; these read AVLA…SAAM and TLAA…TAGF. The short motif at 89–91 is the NPA 1 element; it reads NPA. Transmembrane regions (helical) follow at residues 108–128, 148–168, and 176–196; these read VLYV…LRFL, GLVM…AMIL, and AIGP…GGNF. The NPA 2 motif lies at 202-204; it reads NPA. The helical transmembrane segment at 223–243 threads the bilayer; it reads WIGPLLGGPLAGFVYESLFLV.

The protein belongs to the MIP/aquaporin (TC 1.A.8) family. TIP (TC 1.A.8.10) subfamily.

It localises to the vacuole membrane. Its function is as follows. Aquaporins facilitate the transport of water and small neutral solutes across cell membranes. The polypeptide is Aquaporin TIP4-1 (TIP4-1) (Zea mays (Maize)).